A 289-amino-acid chain; its full sequence is Poly-beta-1,6-N-acetyl-D-glucosamine N-deacetylase (289 aa).

The N-terminal stretch at Met1–Ala30 is a signal peptide. The region spanning Arg113–Lys289 is the NodB homology domain.

It belongs to the polysaccharide deacetylase family.

The protein localises to the secreted. The protein resides in the cell wall. Functionally, catalyzes the N-deacetylation of poly-beta-1,6-N-acetyl-D-glucosamine (PNAG, also referred to as PIA), a biofilm adhesin polysaccharide. In fact, the IcaB deacetylase converts 15 to 20% of the GlcNAc residues of PNAG to glucosamine. N-deacetylation is crucial for attachment of the polysaccharide to the bacterial cell surface; it leads to the introduction of positive charges in the otherwise neutral PIA polymer, allowing electrostatic interactions. Deacetylation of the polymer is also essential for key virulence mechanisms of S.epidermidis, namely biofilm formation, colonization, and resistance to neutrophil phagocytosis and human antibacterial peptides. The sequence is that of Poly-beta-1,6-N-acetyl-D-glucosamine N-deacetylase (icaB) from Staphylococcus epidermidis (strain ATCC 35984 / DSM 28319 / BCRC 17069 / CCUG 31568 / BM 3577 / RP62A).